Reading from the N-terminus, the 406-residue chain is 4-hydroxy-3-methylbut-2-enyl diphosphate reductase (406 aa).

[4Fe-4S] cluster is bound at residue C66. H96 is a binding site for (2E)-4-hydroxy-3-methylbut-2-enyl diphosphate. H96 serves as a coordination point for dimethylallyl diphosphate. Residue H96 participates in isopentenyl diphosphate binding. Residue C157 coordinates [4Fe-4S] cluster. Position 185 (H185) interacts with (2E)-4-hydroxy-3-methylbut-2-enyl diphosphate. Dimethylallyl diphosphate is bound at residue H185. Position 185 (H185) interacts with isopentenyl diphosphate. Residue E187 is the Proton donor of the active site. T250 is a binding site for (2E)-4-hydroxy-3-methylbut-2-enyl diphosphate. C288 is a [4Fe-4S] cluster binding site. 4 residues coordinate (2E)-4-hydroxy-3-methylbut-2-enyl diphosphate: S317, S318, N319, and S379. Dimethylallyl diphosphate is bound by residues S317, S318, N319, and S379. Positions 317, 318, 319, and 379 each coordinate isopentenyl diphosphate.

This sequence belongs to the IspH family. The cofactor is [4Fe-4S] cluster.

It catalyses the reaction isopentenyl diphosphate + 2 oxidized [2Fe-2S]-[ferredoxin] + H2O = (2E)-4-hydroxy-3-methylbut-2-enyl diphosphate + 2 reduced [2Fe-2S]-[ferredoxin] + 2 H(+). The enzyme catalyses dimethylallyl diphosphate + 2 oxidized [2Fe-2S]-[ferredoxin] + H2O = (2E)-4-hydroxy-3-methylbut-2-enyl diphosphate + 2 reduced [2Fe-2S]-[ferredoxin] + 2 H(+). It functions in the pathway isoprenoid biosynthesis; dimethylallyl diphosphate biosynthesis; dimethylallyl diphosphate from (2E)-4-hydroxy-3-methylbutenyl diphosphate: step 1/1. It participates in isoprenoid biosynthesis; isopentenyl diphosphate biosynthesis via DXP pathway; isopentenyl diphosphate from 1-deoxy-D-xylulose 5-phosphate: step 6/6. In terms of biological role, catalyzes the conversion of 1-hydroxy-2-methyl-2-(E)-butenyl 4-diphosphate (HMBPP) into a mixture of isopentenyl diphosphate (IPP) and dimethylallyl diphosphate (DMAPP). Acts in the terminal step of the DOXP/MEP pathway for isoprenoid precursor biosynthesis. The chain is 4-hydroxy-3-methylbut-2-enyl diphosphate reductase from Synechococcus sp. (strain RCC307).